A 313-amino-acid polypeptide reads, in one-letter code: NADH-ubiquinone oxidoreductase chain 1 (313 aa).

10 helical membrane-spanning segments follow: residues 6 to 26, 31 to 51, 62 to 82, 84 to 104, 109 to 129, 142 to 162, 183 to 203, 216 to 235, 250 to 270, and 286 to 306; these read IIII…FVSL, ILAL…ILTP, FIIF…IITA, CIFL…DTGF, MLCV…CFLF, MFFS…IYSL, FYIA…LDGL, LVAG…YSVL, LCFG…FGFF, and AFIL…LFTT.

Belongs to the complex I subunit 1 family.

The protein resides in the mitochondrion inner membrane. It carries out the reaction a ubiquinone + NADH + 5 H(+)(in) = a ubiquinol + NAD(+) + 4 H(+)(out). Functionally, core subunit of the mitochondrial membrane respiratory chain NADH dehydrogenase (Complex I) that is believed to belong to the minimal assembly required for catalysis. Complex I functions in the transfer of electrons from NADH to the respiratory chain. The immediate electron acceptor for the enzyme is believed to be ubiquinone. This chain is NADH-ubiquinone oxidoreductase chain 1 (ND1), found in Leishmania tarentolae (Sauroleishmania tarentolae).